The following is a 496-amino-acid chain: Guanosine-5'-triphosphate,3'-diphosphate pyrophosphatase (496 aa).

The protein belongs to the GppA/Ppx family. GppA subfamily.

It carries out the reaction guanosine 3'-diphosphate 5'-triphosphate + H2O = guanosine 3',5'-bis(diphosphate) + phosphate + H(+). Its pathway is purine metabolism; ppGpp biosynthesis; ppGpp from GTP: step 2/2. In terms of biological role, catalyzes the conversion of pppGpp to ppGpp. Guanosine pentaphosphate (pppGpp) is a cytoplasmic signaling molecule which together with ppGpp controls the 'stringent response', an adaptive process that allows bacteria to respond to amino acid starvation, resulting in the coordinated regulation of numerous cellular activities. The polypeptide is Guanosine-5'-triphosphate,3'-diphosphate pyrophosphatase (Aeromonas hydrophila subsp. hydrophila (strain ATCC 7966 / DSM 30187 / BCRC 13018 / CCUG 14551 / JCM 1027 / KCTC 2358 / NCIMB 9240 / NCTC 8049)).